The following is a 478-amino-acid chain: DNA gyrase subunit B (478 aa).

The Toprim domain maps to 319–438 (CELYLVEGDS…GGHVYIAQPP (120 aa)). Glu-325, Asp-403, and Asp-405 together coordinate Mg(2+).

This sequence belongs to the type II topoisomerase GyrB family. Heterotetramer, composed of two GyrA and two GyrB chains. In the heterotetramer, GyrA contains the active site tyrosine that forms a transient covalent intermediate with DNA, while GyrB binds cofactors and catalyzes ATP hydrolysis. Mg(2+) serves as cofactor. Requires Mn(2+) as cofactor. The cofactor is Ca(2+).

It is found in the cytoplasm. It catalyses the reaction ATP-dependent breakage, passage and rejoining of double-stranded DNA.. In terms of biological role, a type II topoisomerase that negatively supercoils closed circular double-stranded (ds) DNA in an ATP-dependent manner to modulate DNA topology and maintain chromosomes in an underwound state. Negative supercoiling favors strand separation, and DNA replication, transcription, recombination and repair, all of which involve strand separation. Also able to catalyze the interconversion of other topological isomers of dsDNA rings, including catenanes and knotted rings. Type II topoisomerases break and join 2 DNA strands simultaneously in an ATP-dependent manner. The protein is DNA gyrase subunit B (gyrB) of Cytophaga hutchinsonii.